A 389-amino-acid chain; its full sequence is 5-hydroxytryptamine receptor 1B (389 aa).

Positions 1 to 27 (MEETNTHCAPPPPAGSQTGVSQANLSS) are disordered. The Extracellular portion of the chain corresponds to 1–45 (MEETNTHCAPPPPAGSQTGVSQANLSSAPPNCSTEGYIYQDSIAL). Polar residues predominate over residues 15–27 (GSQTGVSQANLSS). N-linked (GlcNAc...) asparagine glycans are attached at residues asparagine 24 and asparagine 31. The helical transmembrane segment at 46 to 71 (PWKVLLILVLALFTLATTLSNAFVIA) threads the bilayer. Residues 72–85 (TVYRTRKLHTPANY) are Cytoplasmic-facing. The helical transmembrane segment at 86–110 (LIASLAVTDLLVSILVMPISTMYTV) threads the bilayer. Residues 111–118 (TGRWTLGQ) lie on the Extracellular side of the membrane. A helical membrane pass occupies residues 119-144 (VVCDFWLSSDITCCTASILHLCVIAL). Residues cysteine 121 and cysteine 198 are joined by a disulfide bond. Positions 128 and 133 each coordinate ergotamine. The short motif at 145 to 147 (DRY) is the DRY motif; important for ligand-induced conformation changes and signaling element. Over 145 to 164 (DRYWAITDAVEYSAKRTPKR) the chain is Cytoplasmic. Residues 165 to 183 (AAVMIALVWVFSISISLPP) form a helical membrane-spanning segment. Over 184-204 (FFWRQAKAEEEVSDCRVNTDH) the chain is Extracellular. Residue valine 200 participates in ergotamine binding. The helical transmembrane segment at 205–228 (MLYTVYSTVGAFYFPTLLLIALYG) threads the bilayer. Residues 229 to 314 (RIYVEARSRI…AARERKATKT (86 aa)) lie on the Cytoplasmic side of the membrane. The segment covering 258–271 (DSPGSTSSVTSVNS) has biased composition (polar residues). The disordered stretch occupies residues 258 to 281 (DSPGSTSSVTSVNSRAPDVPSESG). The chain crosses the membrane as a helical span at residues 315–336 (LGIILGAFIVCWLPFFIISLVM). Residues 337-346 (PICKDACWFH) lie on the Extracellular side of the membrane. Residues 347–369 (LAIFDFFTWLGYLNSLINPIIYT) traverse the membrane as a helical segment. An NPxxY motif; important for ligand-induced conformation changes and signaling motif is present at residues 364–368 (NPIIY). The Cytoplasmic portion of the chain corresponds to 370–389 (MSNEDFKQAFHKLIRFKCTG). The S-palmitoyl cysteine moiety is linked to residue cysteine 387.

The protein belongs to the G-protein coupled receptor 1 family. Homodimer. Heterodimer with HTR1D. In terms of processing, phosphorylated. Desensitization of the receptor may be mediated by its phosphorylation. Post-translationally, palmitoylated.

Its subcellular location is the cell membrane. G-protein coupled receptor for 5-hydroxytryptamine (serotonin). Also functions as a receptor for ergot alkaloid derivatives, various anxiolytic and antidepressant drugs and other psychoactive substances, such as lysergic acid diethylamide (LSD). Ligand binding causes a conformation change that triggers signaling via guanine nucleotide-binding proteins (G proteins) and modulates the activity of downstream effectors, such as adenylate cyclase. HTR1B is coupled to G(i)/G(o) G alpha proteins and mediates inhibitory neurotransmission by inhibiting adenylate cyclase activity. Arrestin family members inhibit signaling via G proteins and mediate activation of alternative signaling pathways. Regulates the release of 5-hydroxytryptamine, dopamine and acetylcholine in the brain, and thereby affects neural activity, nociceptive processing, pain perception, mood and behavior. Besides, plays a role in vasoconstriction of cerebral arteries. The sequence is that of 5-hydroxytryptamine receptor 1B (HTR1B) from Felis catus (Cat).